A 582-amino-acid polypeptide reads, in one-letter code: Solute carrier family 15 member 3 (582 aa).

The disordered stretch occupies residues 1–20; sequence MSALRAEQQPSRSGERQPLV. 4 helical membrane-spanning segments follow: residues 33–53, 77–97, 102–122, and 155–175; these read TAAA…FGVT, LLFL…ADVY, LAIS…LTTI, and PYCA…ASSV. Asn178 carries N-linked (GlcNAc...) asparagine glycosylation. Residues 201 to 221 traverse the membrane as a helical segment; that stretch reads WFYWSINLGAILSLLVVAFIE. A glycan (N-linked (GlcNAc...) asparagine) is linked at Asn223. 2 helical membrane-spanning segments follow: residues 232 to 252 and 312 to 332; these read IIVG…PVFI and FQVL…WMVY. A glycan (N-linked (GlcNAc...) asparagine) is linked at Asn357. 2 helical membrane passes run 371 to 391 and 409 to 429; these read IPEA…VPVK and LQKM…AGVL. Asn440 carries N-linked (GlcNAc...) asparagine glycosylation. A run of 3 helical transmembrane segments spans residues 466-485, 498-518, and 541-561; these read YLLI…EFAY, GIFF…VALL, and LYFF…LWIA. Asn575 is a glycosylation site (N-linked (GlcNAc...) asparagine).

This sequence belongs to the major facilitator superfamily. Proton-dependent oligopeptide transporter (POT/PTR) (TC 2.A.17) family. As to expression, abundant expression in lung, spleen and thymus, and detected faintly in brain, liver, adrenal gland and heart at protein level.

Its subcellular location is the lysosome membrane. It localises to the endosome membrane. The enzyme catalyses N-acetyl-D-muramoyl-L-alanyl-D-isoglutamine(out) + n H(+)(out) = N-acetyl-D-muramoyl-L-alanyl-D-isoglutamine(in) + n H(+)(in). It carries out the reaction glycylglycylglycine(out) + n H(+)(out) = glycylglycylglycine(in) + n H(+)(in). It catalyses the reaction carnosine(out) + n H(+)(out) = carnosine(in) + n H(+)(in). The catalysed reaction is L-histidine(out) + n H(+)(out) = L-histidine(in) + n H(+)(in). Proton-coupled amino-acid transporter that transports free histidine and certain di- and tripeptides, and is involved in innate immune response. Also able to transport carnosine. Involved in the detection of microbial pathogens by toll-like receptors (TLRs) and NOD-like receptors (NLRs), probably by mediating transport of bacterial peptidoglycans across the endolysosomal membrane: catalyzes the transport of certain bacterial peptidoglycans, such as muramyl dipeptide (MDP), the NOD2 ligand. The polypeptide is Solute carrier family 15 member 3 (Slc15a3) (Rattus norvegicus (Rat)).